The sequence spans 352 residues: Protein O-mannose kinase (352 aa).

The Cytoplasmic portion of the chain corresponds to 1-16; sequence MERKPSVCRKSGSWNC. Residues 17–37 form a helical; Signal-anchor for type II membrane protein membrane-spanning segment; it reads LLVLFLLLLFTVVSVNFLLYM. The Lumenal portion of the chain corresponds to 38-352; sequence YIDQMYAPSR…MAVAETREML (315 aa). The region spanning 82-352 is the Protein kinase domain; sequence VRKLKLVGEG…MAVAETREML (271 aa).

Belongs to the protein kinase superfamily. Ser/Thr protein kinase family. STKL subfamily.

The protein resides in the endoplasmic reticulum membrane. It catalyses the reaction 3-O-[beta-D-GalNAc-(1-&gt;3)-beta-D-GlcNAc-(1-&gt;4)-alpha-D-Man]-L-Thr-[protein] + ATP = 3-O-[beta-D-GalNAc-(1-&gt;3)-beta-D-GlcNAc-(1-&gt;4)-(O-6-P-alpha-D-Man)]-Thr-[protein] + ADP + H(+). Protein O-mannose kinase that specifically mediates phosphorylation at the 6-position of an O-mannose of the trisaccharide (N-acetylgalactosamine (GalNAc)-beta-1,3-N-acetylglucosamine (GlcNAc)-beta-1,4-mannose) to generate phosphorylated O-mannosyl trisaccharide (N-acetylgalactosamine-beta-1,3-N-acetylglucosamine-beta-1,4-(phosphate-6-)mannose). Phosphorylated O-mannosyl trisaccharide is a carbohydrate structure present in alpha-dystroglycan (dag1), which is required for binding laminin G-like domain-containing extracellular proteins with high affinity. Only shows kinase activity when the GalNAc-beta-3-GlcNAc-beta-terminus is linked to the 4-position of O-mannose, suggesting that this disaccharide serves as the substrate recognition motif. The protein is Protein O-mannose kinase (pomk) of Xenopus laevis (African clawed frog).